Here is a 430-residue protein sequence, read N- to C-terminus: UDP-N-acetylglucosamine 1-carboxyvinyltransferase (430 aa).

Position 22–23 (22–23 (KN)) interacts with phosphoenolpyruvate. Residue Arg-102 participates in UDP-N-acetyl-alpha-D-glucosamine binding. Cys-126 functions as the Proton donor in the catalytic mechanism. The residue at position 126 (Cys-126) is a 2-(S-cysteinyl)pyruvic acid O-phosphothioketal. Residues 131 to 135 (RPVDL), 172 to 175 (KVSV), Asp-317, and Ile-339 each bind UDP-N-acetyl-alpha-D-glucosamine.

The protein belongs to the EPSP synthase family. MurA subfamily.

Its subcellular location is the cytoplasm. The enzyme catalyses phosphoenolpyruvate + UDP-N-acetyl-alpha-D-glucosamine = UDP-N-acetyl-3-O-(1-carboxyvinyl)-alpha-D-glucosamine + phosphate. It functions in the pathway cell wall biogenesis; peptidoglycan biosynthesis. Cell wall formation. Adds enolpyruvyl to UDP-N-acetylglucosamine. This is UDP-N-acetylglucosamine 1-carboxyvinyltransferase from Rhizobium johnstonii (strain DSM 114642 / LMG 32736 / 3841) (Rhizobium leguminosarum bv. viciae).